A 256-amino-acid polypeptide reads, in one-letter code: MWFLILFLALSLGGIDAAPPVQSQVDCENSQPWHVAVYRFNKYQCGGVLLDRNWVLTAAHCYNDKYQVWLGKNNFLEDEPSDQHRLVSKAIPHPDFNMSLLNEHTPQPEDDYSNDLMLLRLSKPADITDVVKPITLPTEEPKLGSTCLASGWGSTTPIKFKYPDDLQCVNLKLLPNEDCDKAHEMKVTDAMLCAGEMDGGSYTCEHDSGGPLICDGILQGITSWGPEPCGEPTEPSVYTKLIKFSSWIRETMANNP.

Positions 1–17 (MWFLILFLALSLGGIDA) are cleaved as a signal peptide. Positions 18–24 (APPVQSQ) are activation peptide homolog. In terms of domain architecture, Peptidase S1 spans 18 to 253 (APPVQSQVDC…FSSWIRETMA (236 aa)). A disulfide bond links Cys-45 and Cys-61. Zn(2+) contacts are provided by Glu-77 and His-84. 3 disulfide bridges follow: Cys-147–Cys-214, Cys-179–Cys-193, and Cys-204–Cys-229.

Belongs to the peptidase S1 family. Kallikrein subfamily. 7S nerve growth factor is composed of two alpha chains, a beta dimer composed of identical chains, and two gamma chains. The cofactor is Zn(2+). In terms of processing, the presence of Gln-24 prevents cleavage of the activation peptide, which remains attached at the amino end of the mature alpha chain.

The protein is Kallikrein 1-related peptidase-like b4 (Klk1b4) of Mus musculus (Mouse).